The chain runs to 505 residues: MSEQETRGANEAIDFNDELRNRREKLAALRQQGVAFPNDFRRDHTSDQLHEEFDAKDNQELESLNIEVSVAGRMMTRRIMGKASFVTLQDVGGRIQLYVARDSLPEGVYNDQFKKWDLGDIIGARGTLFKTQTGELSIHCTELRLLTKALRPLPDKFHGLQDQEVRYRQRYLDLIANDKSRQTFVVRSKILAAIRQFMVARGFMEVETPMMQVIPGGASARPFITHHNALDLDMYLRIAPELYLKRLVVGGFERVFEINRNFRNEGISVRHNPEFTMMELYMAYADYHDLIELTESLFRTLAQEVLGTTKVTYGEHVFDFGKPFEKLTMREAIKKYRPETDMADLDNFDAAKALAESIGITVEKSWGLGRIVTEIFDEVAEAHLIQPTFITEYPAEVSPLARRNDVNPEITDRFEFFIGGREIGNGFSELNDAEDQAERFQEQVNAKAAGDDEAMFYDEDYVTALEYGLPPTAGLGIGIDRMIMLFTNSHTIRDVILFPAMRPQK.

N6-acetyllysine is present on residues Lys-114 and Lys-156. Positions 415 and 422 each coordinate Mg(2+).

The protein belongs to the class-II aminoacyl-tRNA synthetase family. Homodimer. Mg(2+) serves as cofactor.

It localises to the cytoplasm. It carries out the reaction tRNA(Lys) + L-lysine + ATP = L-lysyl-tRNA(Lys) + AMP + diphosphate. The chain is Lysine--tRNA ligase, heat inducible (lysU) from Escherichia coli O157:H7.